Consider the following 395-residue polypeptide: Phosphoribulokinase, chloroplastic (395 aa).

The N-terminal 46 residues, 1-46 (MAVSTIYSTQALNSTHFLTSSSSSKQVFLYRRQPQTNRRFNTLITC), are a transit peptide targeting the chloroplast. Cys-61 and Cys-100 are disulfide-bonded.

Belongs to the phosphoribulokinase family.

The protein localises to the plastid. Its subcellular location is the chloroplast. The enzyme catalyses D-ribulose 5-phosphate + ATP = D-ribulose 1,5-bisphosphate + ADP + H(+). Its pathway is carbohydrate biosynthesis; Calvin cycle. Light regulated via thioredoxin by reversible oxidation/reduction of sulfhydryl/disulfide groups. The sequence is that of Phosphoribulokinase, chloroplastic from Arabidopsis thaliana (Mouse-ear cress).